The following is a 261-amino-acid chain: Hydroxylase cctR (261 aa).

A helical membrane pass occupies residues 38–58; it reads VFVSLLILSNTISFGLLGWIG. Asn-95 carries an N-linked (GlcNAc...) asparagine glycan. Short sequence motifs (HXXHC) lie at residues 146–150 and 176–180; these read HEIHC and HIAHC.

Belongs to the ustYa family.

Its subcellular location is the membrane. It participates in mycotoxin biosynthesis. Hydroxylase; part of the gene cluster that mediates the biosynthesis of the mycotoxin cyclochlorotine, a hepatotoxic and carcinogenic cyclic chlorinated pentapeptide. Within the pathway, cctR performs the last step by hydroxylating cyclochlorotine to yield hydroxycyclochlorotine. The NRPS cctN initially catalyzes the condensation of L-serine (Ser), Pro, L-2-aminobutyrate (2Abu), Ser, and beta-Phe in this order to produce isocyclotine. After the dichlorination of Pro2 catalyzed by cctP2 to produce isocyclochlorotine, the cctO-mediated transacylation of isocyclochlorotine can furnish cyclochlorotine. The subsequent hydroxylation of cyclochlorotine by cctR yields hydroxycyclochlorotine as the final product. CctP1 probably acts as a phenylalanine aminomutase and provides the uncommon building block beta-Phe. Furthermore, 2Abu can be synthesized from threonine by one of the threonine dehydratases and transaminases localized outside of the cluster. The functions of the remaining proteins encoded by the cluster, cctM and cctT, have not been identified yet. The protein is Hydroxylase cctR of Talaromyces islandicus (Penicillium islandicum).